We begin with the raw amino-acid sequence, 169 residues long: Crossover junction endodeoxyribonuclease RuvC (169 aa).

Residues D7, E67, and D139 contribute to the active site. Positions 7, 67, and 139 each coordinate Mg(2+).

It belongs to the RuvC family. In terms of assembly, homodimer which binds Holliday junction (HJ) DNA. The HJ becomes 2-fold symmetrical on binding to RuvC with unstacked arms; it has a different conformation from HJ DNA in complex with RuvA. In the full resolvosome a probable DNA-RuvA(4)-RuvB(12)-RuvC(2) complex forms which resolves the HJ. The cofactor is Mg(2+).

Its subcellular location is the cytoplasm. The catalysed reaction is Endonucleolytic cleavage at a junction such as a reciprocal single-stranded crossover between two homologous DNA duplexes (Holliday junction).. The RuvA-RuvB-RuvC complex processes Holliday junction (HJ) DNA during genetic recombination and DNA repair. Endonuclease that resolves HJ intermediates. Cleaves cruciform DNA by making single-stranded nicks across the HJ at symmetrical positions within the homologous arms, yielding a 5'-phosphate and a 3'-hydroxyl group; requires a central core of homology in the junction. The consensus cleavage sequence is 5'-(A/T)TT(C/G)-3'. Cleavage occurs on the 3'-side of the TT dinucleotide at the point of strand exchange. HJ branch migration catalyzed by RuvA-RuvB allows RuvC to scan DNA until it finds its consensus sequence, where it cleaves and resolves the cruciform DNA. In Rhodospirillum rubrum (strain ATCC 11170 / ATH 1.1.1 / DSM 467 / LMG 4362 / NCIMB 8255 / S1), this protein is Crossover junction endodeoxyribonuclease RuvC.